A 774-amino-acid polypeptide reads, in one-letter code: Fe(3+) dicitrate transport protein FecA (774 aa).

A signal peptide spans 1-33 (MTPLRVFRKTTPLVNTIRLSLLPLAGLSFSAFA). The short motif at 56–63 (FTLSVDAS) is the TonB box element. The TBDR plug domain occupies 129–250 (DVFEHAGARD…VGGVVNFVTR (122 aa)). One can recognise a TBDR beta-barrel domain in the interval 255–774 (DFGIEAGVEG…TLYMQGSLKF (520 aa)). The TonB C-terminal box motif lies at 757 to 774 (GIYAGQPRTLYMQGSLKF).

The protein belongs to the TonB-dependent receptor family. As to quaternary structure, interacts (via periplasmic N-terminus) with FecR (via periplasmic C-terminus).

The protein resides in the cell outer membrane. Its function is as follows. FecA is the outer membrane receptor protein in the Fe(3+) dicitrate transport system. The protein is Fe(3+) dicitrate transport protein FecA (fecA) of Escherichia coli (strain K12).